The following is a 287-amino-acid chain: Small ribosomal subunit protein uS3 (287 aa).

Residues 38-106 enclose the KH type-2 domain; the sequence is IRRLLATGLE…QVQLNILEVK (69 aa). Positions 216–287 are disordered; sequence AAAPAGADRP…AETTTQNPGS (72 aa). Residues 238-287 show a composition bias toward low complexity; that stretch reads SGASGTTATSTDAGRAASGTQEAPAAAEAAAGTEAAAGAAAETTTQNPGS.

The protein belongs to the universal ribosomal protein uS3 family. Part of the 30S ribosomal subunit. Forms a tight complex with proteins S10 and S14.

In terms of biological role, binds the lower part of the 30S subunit head. Binds mRNA in the 70S ribosome, positioning it for translation. The protein is Small ribosomal subunit protein uS3 of Mycobacterium sp. (strain JLS).